A 458-amino-acid polypeptide reads, in one-letter code: MATESPATRRVQVAEHPRLLKLKEMFNSKFGSIPKFYVRAPGRVNIIGEHIDYCGYSVLPMAVEQDVLIAVEPVKTYTLQLANTNPLYPDLSTSANNIQIDKTKPLWHNYFLCGLKGIQEHFGVSNLTGMNCLVDGNIPPSSGLSSSSALVCCAGLVTLTVLGRNLSKVELAEICAKSERYIGTEGGGMDQSISFLAEEGTAKLIEFSPLRATDVKLPSGAVFVIANSCVEMNKAATSHFNIRVMECRLAAKLLAKYKSLQWDKVLRLEEVQAKLGISLEEMLLVTEDALHPEPYNPEEICRCLGISLEELRTQILSPNTQDVLIFKLYQRAKHVYSEAARVLQFKKICEEAPENMVQLLGELMNQSHMSCRDMYECSCPELDQLVDICRKFGAQGSRLTGAGWGGCTVSIVPADKLPSFLANVHKAYYHRSDGSLAPEKQSLFATKPGGGALVLLEA.

The alpha-D-galactose site is built by Arg-43, Glu-49, His-50, and Asp-52. ATP contacts are provided by Gly-143, Ser-145, and Ser-146. Asp-190 is an alpha-D-galactose binding site. The active-site Proton acceptor is Asp-190. Residues Asn-233 and Lys-234 each coordinate ATP.

It belongs to the GHMP kinase family. GalK subfamily. Monomer.

It carries out the reaction N-acetyl-alpha-D-galactosamine + ATP = N-acetyl-alpha-D-galactosamine 1-phosphate + ADP + H(+). Acts on GalNAc. Also acts as a galactokinase when galactose is present at high concentrations. In Pongo abelii (Sumatran orangutan), this protein is N-acetylgalactosamine kinase (GALK2).